A 26-amino-acid chain; its full sequence is Hemocyanin subunit B (26 aa).

This sequence belongs to the tyrosinase family. Hemocyanin subfamily. Hemolymph.

Its subcellular location is the secreted. It is found in the extracellular space. Functionally, hemocyanins are copper-containing oxygen carriers occurring freely dissolved in the hemolymph of many mollusks and arthropods. This chain is Hemocyanin subunit B, found in Carcinus maenas (Common shore crab).